The following is a 205-amino-acid chain: Small ribosomal subunit protein uS5 (205 aa).

An S5 DRBM domain is found at 49–112 (LVDEVLCIDM…TNAKLNIVKV (64 aa)).

The protein belongs to the universal ribosomal protein uS5 family. As to quaternary structure, part of the 30S ribosomal subunit. Contacts protein S4.

Functionally, with S4 and S12 plays an important role in translational accuracy. The protein is Small ribosomal subunit protein uS5 of Methanocorpusculum labreanum (strain ATCC 43576 / DSM 4855 / Z).